Here is a 132-residue protein sequence, read N- to C-terminus: Ribonuclease P protein component 4 (132 aa).

Positions 67, 70, 96, and 99 each coordinate Zn(2+).

Belongs to the eukaryotic/archaeal RNase P protein component 4 family. In terms of assembly, consists of a catalytic RNA component and at least 4-5 protein subunits. The cofactor is Zn(2+).

It is found in the cytoplasm. It carries out the reaction Endonucleolytic cleavage of RNA, removing 5'-extranucleotides from tRNA precursor.. Functionally, part of ribonuclease P, a protein complex that generates mature tRNA molecules by cleaving their 5'-ends. The polypeptide is Ribonuclease P protein component 4 (Thermococcus kodakarensis (strain ATCC BAA-918 / JCM 12380 / KOD1) (Pyrococcus kodakaraensis (strain KOD1))).